A 446-amino-acid chain; its full sequence is tRNA modification GTPase MnmE (446 aa).

Arginine 21, glutamate 77, and lysine 116 together coordinate (6S)-5-formyl-5,6,7,8-tetrahydrofolate. A TrmE-type G domain is found at 212–370 (GFRIALIGAP…LRAALASHVA (159 aa)). Asparagine 222 is a K(+) binding site. Residues 222-227 (NAGKST), 241-247 (TDVAGTT), and 266-269 (DTAG) each bind GTP. Serine 226 is a Mg(2+) binding site. 3 residues coordinate K(+): threonine 241, valine 243, and threonine 246. Residue threonine 247 participates in Mg(2+) binding. Lysine 446 is a binding site for (6S)-5-formyl-5,6,7,8-tetrahydrofolate.

This sequence belongs to the TRAFAC class TrmE-Era-EngA-EngB-Septin-like GTPase superfamily. TrmE GTPase family. As to quaternary structure, homodimer. Heterotetramer of two MnmE and two MnmG subunits. The cofactor is K(+).

The protein resides in the cytoplasm. In terms of biological role, exhibits a very high intrinsic GTPase hydrolysis rate. Involved in the addition of a carboxymethylaminomethyl (cmnm) group at the wobble position (U34) of certain tRNAs, forming tRNA-cmnm(5)s(2)U34. This Caulobacter vibrioides (strain ATCC 19089 / CIP 103742 / CB 15) (Caulobacter crescentus) protein is tRNA modification GTPase MnmE.